A 284-amino-acid chain; its full sequence is D-tagatose-1,6-bisphosphate aldolase subunit GatY (284 aa).

Residue Asp82 is the Proton donor of the active site. Zn(2+)-binding residues include His83 and His180. Gly181 is a dihydroxyacetone phosphate binding site. Position 208 (His208) interacts with Zn(2+). Dihydroxyacetone phosphate contacts are provided by residues 209 to 211 (GAS) and 230 to 233 (NVAT).

It belongs to the class II fructose-bisphosphate aldolase family. TagBP aldolase GatY subfamily. In terms of assembly, forms a complex with GatZ. The cofactor is Zn(2+).

It carries out the reaction D-tagatofuranose 1,6-bisphosphate = D-glyceraldehyde 3-phosphate + dihydroxyacetone phosphate. It participates in carbohydrate metabolism; D-tagatose 6-phosphate degradation; D-glyceraldehyde 3-phosphate and glycerone phosphate from D-tagatose 6-phosphate: step 2/2. In terms of biological role, catalytic subunit of the tagatose-1,6-bisphosphate aldolase GatYZ, which catalyzes the reversible aldol condensation of dihydroxyacetone phosphate (DHAP or glycerone-phosphate) with glyceraldehyde 3-phosphate (G3P) to produce tagatose 1,6-bisphosphate (TBP). Requires GatZ subunit for full activity and stability. Is involved in the catabolism of galactitol. This chain is D-tagatose-1,6-bisphosphate aldolase subunit GatY, found in Salmonella paratyphi B (strain ATCC BAA-1250 / SPB7).